The sequence spans 360 residues: Galactoside alpha-(1,2)-fucosyltransferase 1 (360 aa).

Topologically, residues 1-8 (MWAPGHHH) are cytoplasmic. The chain crosses the membrane as a helical; Signal-anchor for type II membrane protein span at residues 9 to 27 (LCLIFLLTCVFACVFFLLI). Over 28-360 (HQNLFHSGLD…GINADLSPLQ (333 aa)) the chain is Lumenal. N-linked (GlcNAc...) asparagine glycans are attached at residues asparagine 65, asparagine 301, and asparagine 327.

This sequence belongs to the glycosyltransferase 11 family. As to expression, expressed in brain, intestine and kidney.

Its subcellular location is the golgi apparatus. It is found in the golgi stack membrane. The enzyme catalyses a ganglioside GM1 + GDP-beta-L-fucose = a ganglioside Fuc-GM1 + GDP + H(+). It catalyses the reaction a beta-D-galactosyl-(1-&gt;4)-N-acetyl-beta-D-glucosaminyl derivative + GDP-beta-L-fucose = an alpha-L-Fuc-(1-&gt;2)-beta-D-Gal-(1-&gt;4)-beta-D-GlcNAc derivative + GDP + H(+). It carries out the reaction a ganglioside GA1 + GDP-beta-L-fucose = a ganglioside Fuc-GA1 + GDP + H(+). The catalysed reaction is a beta-D-Gal-(1-&gt;3)-beta-D-GlcNAc-(1-&gt;3)-beta-D-Gal-(1-&gt;4)-beta-D-Glc-(1&lt;-&gt;1')-Cer(d18:1(4E)) + GDP-beta-L-fucose = alpha-L-fucosyl-(1-&gt;2)- beta-D-galactosyl-(1-&gt;3)-N-acetyl-beta-D-glucosaminyl-(1-&gt;3)-beta-D-galactosyl-(1-&gt;4)-beta-D-glucosyl-(1&lt;-&gt;1')-N-acylsphing-4-enine + GDP + H(+). The enzyme catalyses a neolactoside nLc4Cer(d18:1(4E)) + GDP-beta-L-fucose = a neolactoside IV(2)-alpha-Fuc-nLc4Cer(d18:1(4E)) + GDP + H(+). It catalyses the reaction beta-D-galactosyl-(1-&gt;3)-N-acetyl-D-galactosamine + GDP-beta-L-fucose = alpha-L-fucosyl-(1-&gt;2)-beta-D-galactosyl-(1-&gt;3)-N-acetyl-D-galactosamine + GDP + H(+). It participates in protein modification; protein glycosylation. Functionally, catalyzes the transfer of L-fucose, from a guanosine diphosphate-beta-L-fucose, to the terminal galactose residue of glycoconjugates through an alpha(1,2) linkage leading to H antigen synthesis that is an intermediate substrate in the synthesis of ABO blood group antigens. H antigen is essential for maturation of the glomerular layer of the main olfactory bulb, in cell migration and early cell-cell contacts during tumor associated angiogenesis. Preferentially fucosylates soluble lactose and to a lesser extent, fucosylates glycolipids gangliosides GA1 and GM1a. The polypeptide is Galactoside alpha-(1,2)-fucosyltransferase 1 (Bos taurus (Bovine)).